The chain runs to 353 residues: Methionine import ATP-binding protein MetN (353 aa).

In terms of domain architecture, ABC transporter spans Ile-11–Leu-251. ATP is bound at residue Gly-48–Ser-55.

Belongs to the ABC transporter superfamily. Methionine importer (TC 3.A.1.24) family. In terms of assembly, the complex is composed of two ATP-binding proteins (MetN), two transmembrane proteins (MetI) and a solute-binding protein (MetQ).

The protein localises to the cell inner membrane. It catalyses the reaction L-methionine(out) + ATP + H2O = L-methionine(in) + ADP + phosphate + H(+). It carries out the reaction D-methionine(out) + ATP + H2O = D-methionine(in) + ADP + phosphate + H(+). Part of the ABC transporter complex MetNIQ involved in methionine import. Responsible for energy coupling to the transport system. In Cereibacter sphaeroides (strain ATCC 17023 / DSM 158 / JCM 6121 / CCUG 31486 / LMG 2827 / NBRC 12203 / NCIMB 8253 / ATH 2.4.1.) (Rhodobacter sphaeroides), this protein is Methionine import ATP-binding protein MetN.